Reading from the N-terminus, the 181-residue chain is Inner membrane-spanning protein YciB (181 aa).

Helical transmembrane passes span 3 to 23, 54 to 74, 81 to 101, 119 to 139, and 149 to 169; these read LLFDFFPIVLFFIVYKFFGIY, SLAIIMVLGGATLFFQNPWFI, IYWLSALVFYGSGYIGSKPLI, LNLAWTLFFIVMGALNLYVAY, and FKLFGGVGFTLLFVLIQAFYL.

This sequence belongs to the YciB family.

Its subcellular location is the cell inner membrane. In terms of biological role, plays a role in cell envelope biogenesis, maintenance of cell envelope integrity and membrane homeostasis. The protein is Inner membrane-spanning protein YciB of Legionella pneumophila (strain Corby).